We begin with the raw amino-acid sequence, 147 residues long: Submaxillary gland androgen-regulated protein 3A (147 aa).

A signal peptide spans 1-22; the sequence is MKPLNLVLGLCILVGCFLSCEC. Residues 27 to 128 form a disordered region; it reads RRHDPRGPFP…ISITTPTARD (102 aa). The span at 33 to 105 shows a compositional bias: pro residues; sequence GPFPPPPPPH…PTPSIPPTGP (73 aa). 3 repeat units span residues 43-54, 55-66, and 67-78. The interval 43 to 78 is 3 X 12 AA tandem repeats of G-P-G-I-G-R-P-[HP]-P-P-P-[PF]; it reads GPGIGRPHPPPFGPGIGRPPPPPFGPGIGRPPPPPP. The segment covering 108 to 127 has biased composition (polar residues); the sequence is TVQATTMPAASISITTPTAR.

Belongs to the PROL1/PROL3 family. As to expression, secreted into saliva by submaxillary gland.

The protein localises to the secreted. Its function is as follows. May play a role in protection or detoxification. In Mus musculus (Mouse), this protein is Submaxillary gland androgen-regulated protein 3A (Smr3a).